An 84-amino-acid polypeptide reads, in one-letter code: Small ribosomal subunit protein eS27-like (84 aa).

The span at 1–16 (MPLARDLLHPSLDEEK) shows a compositional bias: basic and acidic residues. Residues 1–23 (MPLARDLLHPSLDEEKKKHKKKR) form a disordered region. The C4-type zinc-finger motif lies at 38–60 (PGCYKITTVFSHAQTVVLCVGCS).

Belongs to the eukaryotic ribosomal protein eS27 family. The cofactor is Zn(2+).

The sequence is that of Small ribosomal subunit protein eS27-like (RPS27L) from Bos taurus (Bovine).